A 182-amino-acid polypeptide reads, in one-letter code: Gamma-crystallin N (182 aa).

3 Beta/gamma crystallin 'Greek key' domains span residues glycine 6–serine 46, glycine 47–glycine 89, and phenylalanine 95–glycine 136. Positions leucine 153–leucine 182 are disordered. Residues lysine 169–leucine 182 show a composition bias toward polar residues.

Belongs to the beta/gamma-crystallin family. As to quaternary structure, monomer. As to expression, not specifically expressed in eye.

The polypeptide is Gamma-crystallin N (Homo sapiens (Human)).